The primary structure comprises 314 residues: ATP synthase gamma chain (314 aa).

The protein belongs to the ATPase gamma chain family. As to quaternary structure, F-type ATPases have 2 components, CF(1) - the catalytic core - and CF(0) - the membrane proton channel. CF(1) has five subunits: alpha(3), beta(3), gamma(1), delta(1), epsilon(1). CF(0) has three main subunits: a, b and c.

Its subcellular location is the cellular thylakoid membrane. Produces ATP from ADP in the presence of a proton gradient across the membrane. The gamma chain is believed to be important in regulating ATPase activity and the flow of protons through the CF(0) complex. This Synechococcus sp. (strain JA-2-3B'a(2-13)) (Cyanobacteria bacterium Yellowstone B-Prime) protein is ATP synthase gamma chain.